The following is a 153-amino-acid chain: Myoglobin (153 aa).

The Globin domain maps to 2–147 (GLNDQEWQQV…FRNDMASKYK (146 aa)). H65 contributes to the nitrite binding site. H65 lines the O2 pocket. A heme b-binding site is contributed by H93.

It belongs to the globin family. In terms of assembly, monomeric.

Its subcellular location is the cytoplasm. It is found in the sarcoplasm. The enzyme catalyses Fe(III)-heme b-[protein] + nitric oxide + H2O = Fe(II)-heme b-[protein] + nitrite + 2 H(+). It carries out the reaction H2O2 + AH2 = A + 2 H2O. Functionally, monomeric heme protein which primary function is to store oxygen and facilitate its diffusion within muscle tissues. Reversibly binds oxygen through a pentacoordinated heme iron and enables its timely and efficient release as needed during periods of heightened demand. Depending on the oxidative conditions of tissues and cells, and in addition to its ability to bind oxygen, it also has a nitrite reductase activity whereby it regulates the production of bioactive nitric oxide. Under stress conditions, like hypoxia and anoxia, it also protects cells against reactive oxygen species thanks to its pseudoperoxidase activity. This is Myoglobin (MB) from Aptenodytes forsteri (Emperor penguin).